Here is a 423-residue protein sequence, read N- to C-terminus: CDP-diacylglycerol--serine O-phosphatidyltransferase 2 (423 aa).

9 helical membrane passes run 38 to 58 (PHTISVLLVGACLLIWASGAL), 77 to 97 (WAMIAVFLAYCTLQAPSTILI), 103 to 123 (VWRLVHGLAVVYLVALAFLLF), 195 to 215 (LLLWVLSIGFELMELTFRHML), 222 to 242 (WWDSIILDILICNWFGIWAGM), 294 to 314 (FVQVLFLCVVFMTVELNTFFL), 319 to 339 (WIPPRNPLVVYRLILWWLIAI), 359 to 379 (GAFCWLSLAICIVELLICMKF), and 390 to 410 (TWLIIFWSSVGVALVVFLLAW).

The protein belongs to the CDP-alcohol phosphatidyltransferase class-I family.

Its subcellular location is the endoplasmic reticulum membrane. The catalysed reaction is a CDP-1,2-diacyl-sn-glycerol + L-serine = a 1,2-diacyl-sn-glycero-3-phospho-L-serine + CMP + H(+). It functions in the pathway phospholipid metabolism; phosphatidylethanolamine biosynthesis; phosphatidylethanolamine from CDP-diacylglycerol: step 1/2. Its function is as follows. Catalyzes a base-exchange reaction in which the polar head group of phosphatidylethanolamine (PE) or phosphatidylcholine (PC) is replaced by L-serine. The polypeptide is CDP-diacylglycerol--serine O-phosphatidyltransferase 2 (PSS2) (Oryza sativa subsp. japonica (Rice)).